We begin with the raw amino-acid sequence, 477 residues long: Mannitol 2-dehydrogenase (477 aa).

19 to 30 contacts NAD(+); it reads IVHIGVGNFHRA.

Belongs to the mannitol dehydrogenase family. As to quaternary structure, monomer.

The enzyme catalyses D-mannitol + NAD(+) = D-fructose + NADH + H(+). The chain is Mannitol 2-dehydrogenase (mtlK) from Cereibacter sphaeroides (Rhodobacter sphaeroides).